Here is a 34-residue protein sequence, read N- to C-terminus: MEALVYTFLLVGTLGIIFFAIFFREPPKITSNKK.

Residues 3 to 23 traverse the membrane as a helical segment; sequence ALVYTFLLVGTLGIIFFAIFF.

This sequence belongs to the PsbT family. PSII is composed of 1 copy each of membrane proteins PsbA, PsbB, PsbC, PsbD, PsbE, PsbF, PsbH, PsbI, PsbJ, PsbK, PsbL, PsbM, PsbT, PsbY, PsbZ, Psb30/Ycf12, at least 3 peripheral proteins of the oxygen-evolving complex and a large number of cofactors. It forms dimeric complexes.

It is found in the plastid. The protein resides in the chloroplast thylakoid membrane. In terms of biological role, found at the monomer-monomer interface of the photosystem II (PS II) dimer, plays a role in assembly and dimerization of PSII. PSII is a light-driven water plastoquinone oxidoreductase, using light energy to abstract electrons from H(2)O, generating a proton gradient subsequently used for ATP formation. The chain is Photosystem II reaction center protein T from Klebsormidium bilatum (Filamentous green alga).